Reading from the N-terminus, the 487-residue chain is Selenium-binding protein 2 (487 aa).

The residue at position 2 (Ala-2) is an N-acetylalanine. Cys-19 and Cys-20 together coordinate selenite.

This sequence belongs to the selenium-binding protein family. As to expression, mostly expressed in seedlings, leaves and stems, and, to a lower extent, in flowers and roots.

Its function is as follows. Required for the fusion of female gametophyte polar nuclei. This is Selenium-binding protein 2 (SBP2) from Arabidopsis thaliana (Mouse-ear cress).